Here is a 486-residue protein sequence, read N- to C-terminus: Aspartyl/glutamyl-tRNA(Asn/Gln) amidotransferase subunit B (486 aa).

It belongs to the GatB/GatE family. GatB subfamily. Heterotrimer of A, B and C subunits.

The enzyme catalyses L-glutamyl-tRNA(Gln) + L-glutamine + ATP + H2O = L-glutaminyl-tRNA(Gln) + L-glutamate + ADP + phosphate + H(+). It carries out the reaction L-aspartyl-tRNA(Asn) + L-glutamine + ATP + H2O = L-asparaginyl-tRNA(Asn) + L-glutamate + ADP + phosphate + 2 H(+). Its function is as follows. Allows the formation of correctly charged Asn-tRNA(Asn) or Gln-tRNA(Gln) through the transamidation of misacylated Asp-tRNA(Asn) or Glu-tRNA(Gln) in organisms which lack either or both of asparaginyl-tRNA or glutaminyl-tRNA synthetases. The reaction takes place in the presence of glutamine and ATP through an activated phospho-Asp-tRNA(Asn) or phospho-Glu-tRNA(Gln). This is Aspartyl/glutamyl-tRNA(Asn/Gln) amidotransferase subunit B from Orientia tsutsugamushi (strain Ikeda) (Rickettsia tsutsugamushi).